The primary structure comprises 106 residues: Acidic phospholipase A2 PhTX-III (106 aa).

The Ca(2+) site is built by Tyr23, Gly25, and Gly27. Disulfide bonds link Cys24–Cys40, Cys39–Cys75, Cys45–Cys106, Cys46–Cys68, and Cys55–Cys66. The active site involves His43. Asp44 serves as a coordination point for Ca(2+). The active site involves Asp69.

It depends on Ca(2+) as a cofactor. Expressed by the venom gland.

The protein localises to the secreted. It carries out the reaction a 1,2-diacyl-sn-glycero-3-phosphocholine + H2O = a 1-acyl-sn-glycero-3-phosphocholine + a fatty acid + H(+). Partially inhibited by magnesium ions and completely inhibited by zinc ions These divalent cations may act as competitive antagonists of the cofactor. Snake venom phospholipase A2 (PLA2) that induces inflammatory response, with local edema and release of cytokines IL-1 alpha, IL-6 and TNF-alpha. Does not exhibit myotoxic, anticoagulant and antibacterial effects. Release of pro-inflammatory cytokines may be due to mast cell degranulation, and edema may be induced by arachidonic acid that results from the PLA2 catalytic activity. PLA2 catalyzes the calcium-dependent hydrolysis of the 2-acyl groups in 3-sn-phosphoglycerides. In Bothrocophias hyoprora (Amazonian hognose viper), this protein is Acidic phospholipase A2 PhTX-III.